A 425-amino-acid polypeptide reads, in one-letter code: Serine--tRNA ligase (425 aa).

231 to 233 (TAE) provides a ligand contact to L-serine. Position 262 to 264 (262 to 264 (RSE)) interacts with ATP. Position 285 (Glu285) interacts with L-serine. An ATP-binding site is contributed by 349–352 (EISS). Ser385 is a binding site for L-serine.

The protein belongs to the class-II aminoacyl-tRNA synthetase family. Type-1 seryl-tRNA synthetase subfamily. Homodimer. The tRNA molecule binds across the dimer.

Its subcellular location is the cytoplasm. It catalyses the reaction tRNA(Ser) + L-serine + ATP = L-seryl-tRNA(Ser) + AMP + diphosphate + H(+). It carries out the reaction tRNA(Sec) + L-serine + ATP = L-seryl-tRNA(Sec) + AMP + diphosphate + H(+). Its pathway is aminoacyl-tRNA biosynthesis; selenocysteinyl-tRNA(Sec) biosynthesis; L-seryl-tRNA(Sec) from L-serine and tRNA(Sec): step 1/1. In terms of biological role, catalyzes the attachment of serine to tRNA(Ser). Is also able to aminoacylate tRNA(Sec) with serine, to form the misacylated tRNA L-seryl-tRNA(Sec), which will be further converted into selenocysteinyl-tRNA(Sec). The sequence is that of Serine--tRNA ligase from Bacillus subtilis (strain 168).